The chain runs to 338 residues: Holliday junction branch migration complex subunit RuvB (338 aa).

Residues 4–187 (ADKDRLVSGD…FGISEHMAYY (184 aa)) form a large ATPase domain (RuvB-L) region. Residues Leu26, Arg27, Gly68, Lys71, Thr72, Thr73, 134-136 (EDF), Arg177, Tyr187, and Arg224 contribute to the ATP site. Thr72 contributes to the Mg(2+) binding site. Residues 188–258 (SADDLSEIVK…MVDHALDQLQ (71 aa)) are small ATPAse domain (RuvB-S). The head domain (RuvB-H) stretch occupies residues 261–338 (QQGLDQIDRK…AHMGMSAEQH (78 aa)). DNA-binding residues include Arg316 and Arg321.

This sequence belongs to the RuvB family. As to quaternary structure, homohexamer. Forms an RuvA(8)-RuvB(12)-Holliday junction (HJ) complex. HJ DNA is sandwiched between 2 RuvA tetramers; dsDNA enters through RuvA and exits via RuvB. An RuvB hexamer assembles on each DNA strand where it exits the tetramer. Each RuvB hexamer is contacted by two RuvA subunits (via domain III) on 2 adjacent RuvB subunits; this complex drives branch migration. In the full resolvosome a probable DNA-RuvA(4)-RuvB(12)-RuvC(2) complex forms which resolves the HJ.

It localises to the cytoplasm. It carries out the reaction ATP + H2O = ADP + phosphate + H(+). Its function is as follows. The RuvA-RuvB-RuvC complex processes Holliday junction (HJ) DNA during genetic recombination and DNA repair, while the RuvA-RuvB complex plays an important role in the rescue of blocked DNA replication forks via replication fork reversal (RFR). RuvA specifically binds to HJ cruciform DNA, conferring on it an open structure. The RuvB hexamer acts as an ATP-dependent pump, pulling dsDNA into and through the RuvAB complex. RuvB forms 2 homohexamers on either side of HJ DNA bound by 1 or 2 RuvA tetramers; 4 subunits per hexamer contact DNA at a time. Coordinated motions by a converter formed by DNA-disengaged RuvB subunits stimulates ATP hydrolysis and nucleotide exchange. Immobilization of the converter enables RuvB to convert the ATP-contained energy into a lever motion, pulling 2 nucleotides of DNA out of the RuvA tetramer per ATP hydrolyzed, thus driving DNA branch migration. The RuvB motors rotate together with the DNA substrate, which together with the progressing nucleotide cycle form the mechanistic basis for DNA recombination by continuous HJ branch migration. Branch migration allows RuvC to scan DNA until it finds its consensus sequence, where it cleaves and resolves cruciform DNA. This chain is Holliday junction branch migration complex subunit RuvB, found in Lacticaseibacillus paracasei (strain ATCC 334 / BCRC 17002 / CCUG 31169 / CIP 107868 / KCTC 3260 / NRRL B-441) (Lactobacillus paracasei).